The chain runs to 141 residues: Hemoglobin subunit alpha-1 (141 aa).

In terms of domain architecture, Globin spans 1 to 141; the sequence is VLSPEDKNNV…VSTVLTSKYR (141 aa). O2 is bound at residue histidine 58. A heme b-binding site is contributed by histidine 87.

This sequence belongs to the globin family. As to quaternary structure, heterotetramer of two alpha chains and two beta chains. In terms of tissue distribution, red blood cells.

In terms of biological role, involved in oxygen transport from the lung to the various peripheral tissues. This is Hemoglobin subunit alpha-1 from Tadarida brasiliensis (Brazilian free-tailed bat).